The sequence spans 363 residues: Chorismate synthase (363 aa).

NADP(+)-binding residues include arginine 48 and arginine 54. FMN is bound by residues 125 to 127 (RSS), 237 to 238 (NA), glycine 277, 292 to 296 (KPTSS), and arginine 318.

Belongs to the chorismate synthase family. As to quaternary structure, homotetramer. FMNH2 serves as cofactor.

The enzyme catalyses 5-O-(1-carboxyvinyl)-3-phosphoshikimate = chorismate + phosphate. The protein operates within metabolic intermediate biosynthesis; chorismate biosynthesis; chorismate from D-erythrose 4-phosphate and phosphoenolpyruvate: step 7/7. Functionally, catalyzes the anti-1,4-elimination of the C-3 phosphate and the C-6 proR hydrogen from 5-enolpyruvylshikimate-3-phosphate (EPSP) to yield chorismate, which is the branch point compound that serves as the starting substrate for the three terminal pathways of aromatic amino acid biosynthesis. This reaction introduces a second double bond into the aromatic ring system. The sequence is that of Chorismate synthase from Stutzerimonas stutzeri (strain A1501) (Pseudomonas stutzeri).